A 278-amino-acid polypeptide reads, in one-letter code: Small ribosomal subunit protein uS5 (278 aa).

Positions 1–43 (MADAPAPAGGRGGFRGGFGGRGRGRGRGRGRGRGRGRGAKDGD) are disordered. Over residues 9 to 21 (GGRGGFRGGFGGR) the composition is skewed to gly residues. Residues 22 to 37 (GRGRGRGRGRGRGRGR) show a composition bias toward basic residues. The region spanning 88 to 151 (LKDEVLKIMP…ILAKLSVVPV (64 aa)) is the S5 DRBM domain.

It belongs to the universal ribosomal protein uS5 family.

Its function is as follows. Component of the ribosome, a large ribonucleoprotein complex responsible for the synthesis of proteins in the cell. The small ribosomal subunit (SSU) binds messenger RNAs (mRNAs) and translates the encoded message by selecting cognate aminoacyl-transfer RNA (tRNA) molecules. The large subunit (LSU) contains the ribosomal catalytic site termed the peptidyl transferase center (PTC), which catalyzes the formation of peptide bonds, thereby polymerizing the amino acids delivered by tRNAs into a polypeptide chain. The nascent polypeptides leave the ribosome through a tunnel in the LSU and interact with protein factors that function in enzymatic processing, targeting, and the membrane insertion of nascent chains at the exit of the ribosomal tunnel. Plays a role in the assembly and function of the 40S ribosomal subunit. Mutations in this protein affects the control of translational fidelity. Involved in nucleolar processing of pre-18S ribosomal RNA and ribosome assembly. The chain is Small ribosomal subunit protein uS5 (RPS2) from Urechis caupo (Innkeeper worm).